The primary structure comprises 239 residues: Putative 3-methyladenine DNA glycosylase (239 aa).

It belongs to the DNA glycosylase MPG family.

This Pseudomonas aeruginosa (strain ATCC 15692 / DSM 22644 / CIP 104116 / JCM 14847 / LMG 12228 / 1C / PRS 101 / PAO1) protein is Putative 3-methyladenine DNA glycosylase.